The sequence spans 1517 residues: MSKFKVIEIKEDARPRDFEAFQLRLASPEKIKSWSYGEVKKPETINYRTLKPERDGLFCAKIFGPIRDYECLCGKYKKMRFKGVKCEKCGVEVANSKVRRSRMGHIELVTPVAHIWYVNSLPSRIGTLLGVKMKDLERVLYYEAYIVENPGDAFYDNESTKKVEYCDVLNEEQYQNLMQRYENSGFKARMGGEVVRDLLANLDLVALLNQLKEEMGATNSEAKKKTIIKRLKVVENFLNSNLNANTDSDEAVPNRPEWMMITNLPVLPPDLRPLVALDGGKFAVSDVNDLYRRVINRNTRLKKLMELDAPEIIIRNEKRMLQEAVDALFDNGRRANAVKGANKRPLKSLSEIIKGKQGRFRQNLLGKRVDFSGRSVIVVGPKLRMDQCGLPKKMALELFKPHLLAKLEEKGYATTVKQAKKMIENKTNEVWECLEEVVKGHPVMLNRAPTLHKLSIQAFHPVLVEGKAIQLHPLVCAAFNADFDGDQMAVHVPLSQEAIAECKVLMLSSMNILLPASGKSVTVPSQDMVLGIYYLSLEKAGAKGSHKICTGIDEVMMALESKCLDIHASIQTMVDGRKITTTAGRLIVKSILPDFVPENSWNKVLKKKDIAALVDYVYKQGGLEITASFLDRLKNLGFEYATKAGISISIADIIVPNDKQKAIDEAKKQVREIQNSYNLGLITSGERYNKIIDIWKSTNNVLSKEMMKLVEKDKEGFNSIYMMADSGARGSAAQISQLAAMRGLMTKPDGSIIETPIISNFREGLNVLEYFISTHGARKGLADTALKTANAGYLTRKLIDVAQNVKITIEDCGTHEGVEINEITADSSIIETLEERILGRVLAEDVIDPITNSVLFAEGTLMDEEKAKILGESGIKSVNIRTPITCKAKKGICAKCYGINLGEGKLVKPGEAVGIISAQSIGEPGTQLTLRTFHSGGTASTDLQDRQVSAQKEGFIRFYNLKTYKNKEGKNIVANRRNAAVLLVEPKIKTPFKGVINIENIHEDVIVSIKDKKQEVKYILRKYDLAKPNELAGVSGSIDGKLYLPYQSGMQVEENESIVEVIKEGWNVPNRIPFASEILVEDGEPVVQNIKAGEKGTLKFYILKGDGLDRVKNVKKGDIVKEKGFFVVIADENDREAKRHYIPRESKIEFNDSEKIDDANTIIASAPKKERKVIAEWDAYNNTIIAEIDGVVSFEDIEAGYSADEQIDEATGKRSLVINEYLPSGVRPTLVIAGKGDKAVRYHLEPKTVIFVHDGDKIAQADILAKTPKAAAKSKDITGGLPRVSELFEARKPKNAAVIAEIDGVVRFDKPLRSKERIIIQAEDGTSAEYLIDKSKHIQVRDGEFIHAGEKLTDGVVSSHDVLKILGEKALHYYLISEIQQVYRGQGVVISDKHIEVIVSQMLRQVKVVDSGHTKFIEGDLVSRRKFREENERIIRMGGEPAIAEPVLLGVTRAAIGSDSVISAASFQETTKVLTEASIAGKFDYLEDLKENVILGRMIPVGTGLYGEQNLKLKEQE.

Zn(2+) is bound by residues Cys-71, Cys-73, Cys-86, and Cys-89. Asp-482, Asp-484, and Asp-486 together coordinate Mg(2+). 4 residues coordinate Zn(2+): Cys-812, Cys-886, Cys-893, and Cys-896.

This sequence belongs to the RNA polymerase beta' chain family. As to quaternary structure, the RNAP catalytic core consists of 2 alpha, 1 beta, 1 beta' and 1 omega subunit. When a sigma factor is associated with the core the holoenzyme is formed, which can initiate transcription. Mg(2+) serves as cofactor. The cofactor is Zn(2+).

It catalyses the reaction RNA(n) + a ribonucleoside 5'-triphosphate = RNA(n+1) + diphosphate. Functionally, DNA-dependent RNA polymerase catalyzes the transcription of DNA into RNA using the four ribonucleoside triphosphates as substrates. This chain is DNA-directed RNA polymerase subunit beta', found in Campylobacter jejuni subsp. jejuni serotype O:2 (strain ATCC 700819 / NCTC 11168).